A 561-amino-acid polypeptide reads, in one-letter code: MMRLTLKSKVLLLAMVPVLLFALVLSGGAVLILKKQADAEVKDTRERLLGDRRAELEHYVQIAMGSIQAEYDRSANGDLNARAEAIARLSKIKYGKDGYIFGYDSQVVRLFRGDSPVDVGKSFRDRRDPSGVYLNRELVEAGRNGSHYVTYTSPLPGNESVMVPKLSYTLYLPKWDMVIGSAINLDGVEAQLVEIKQDIDERIGTLIASIVGIAGVLLVVLLVIGLAVANAMLRPLHQIRQNLDDIAAGEGDLTRRLPVTSYDELGELAGSFNRFVEKIHGLVRQIAGMTGDLKQLVEQMSAQAERSEQAMERQRHETDQVATAINEMSAAAHEVAQSAQRAAEAAQQTDHEGQAAKRVVDGSIERIHALVDEIRDSGTSLDSLQQDVQSIVSVLGVIRSIAEQTNLLALNAAIEAARAGEAGRGFAVVADEVRALASRTQQSTQEIQGMIDRLQQGTNAAVDAMRRSGEAGEGTSNQANQAGDSLDAIAQLIATINAMNAQIASAAEEQTAVAEEINRSVHQIAGAVDSVADEAQQGAQTARSLAQLGQGLGRLVGQFRI.

Residues 1 to 11 (MMRLTLKSKVL) are Cytoplasmic-facing. A helical transmembrane segment spans residues 12 to 32 (LLAMVPVLLFALVLSGGAVLI). Topologically, residues 33–205 (LKKQADAEVK…KQDIDERIGT (173 aa)) are periplasmic. The helical transmembrane segment at 206-226 (LIASIVGIAGVLLVVLLVIGL) threads the bilayer. The Cytoplasmic portion of the chain corresponds to 227–561 (AVANAMLRPL…LGRLVGQFRI (335 aa)). The 55-residue stretch at 230 to 284 (NAMLRPLHQIRQNLDDIAAGEGDLTRRLPVTSYDELGELAGSFNRFVEKIHGLVR) folds into the HAMP domain. The 237-residue stretch at 289–525 (MTGDLKQLVE…EINRSVHQIA (237 aa)) folds into the Methyl-accepting transducer domain. The disordered stretch occupies residues 333–357 (HEVAQSAQRAAEAAQQTDHEGQAAK). The span at 336 to 348 (AQSAQRAAEAAQQ) shows a compositional bias: low complexity.

It belongs to the methyl-accepting chemotaxis (MCP) protein family. As to quaternary structure, homodimer. The ligand-binding domain (LBD) is dimeric in the presence and the absence of ligands.

It is found in the cell inner membrane. Functionally, chemotactic-signal transducers respond to changes in the concentration of attractants and repellents in the environment, transduce a signal from the outside to the inside of the cell, and facilitate sensory adaptation through the variation of the level of methylation. Directly recognizes five C4-dicarboxylic acids: L-malic, citramalic, citraconic, bromosuccinic and methylsuccinic acids. Three of the identified ligands act as chemoattractants (L-malic, D,L-bromosuccinic and L-citramalic acids) whereas two of them (L-methylsuccinic and citraconic acids) behave as antagonists by inhibiting the downstream chemotaxis signaling cascade. Antagonists compete with chemoattractants, thereby decreasing the affinity for chemoattractants and the subsequent chemotactic response. Acts through the che chemosensory pathway. This is Methyl-accepting chemotaxis protein CtpM from Pseudomonas aeruginosa (strain ATCC 15692 / DSM 22644 / CIP 104116 / JCM 14847 / LMG 12228 / 1C / PRS 101 / PAO1).